A 186-amino-acid polypeptide reads, in one-letter code: Peptide deformylase (186 aa).

Positions 99 and 141 each coordinate Fe cation. E142 is an active-site residue. H145 provides a ligand contact to Fe cation.

Belongs to the polypeptide deformylase family. Fe(2+) is required as a cofactor.

The catalysed reaction is N-terminal N-formyl-L-methionyl-[peptide] + H2O = N-terminal L-methionyl-[peptide] + formate. Functionally, removes the formyl group from the N-terminal Met of newly synthesized proteins. Requires at least a dipeptide for an efficient rate of reaction. N-terminal L-methionine is a prerequisite for activity but the enzyme has broad specificity at other positions. This Chlamydia felis (strain Fe/C-56) (Chlamydophila felis) protein is Peptide deformylase.